Here is a 203-residue protein sequence, read N- to C-terminus: Undecaprenyl phosphate transporter A (203 aa).

The next 5 helical transmembrane spans lie at 16-36, 48-68, 108-128, 137-157, and 173-193; these read AIFILILLENVLPIVPSEIIL, LSILTLFIIATIASFIGLLIL, YGVWAVFICRFIPVLRVLITI, VVTFTVISLIGTTIWNFGLIL, and LHTYSRIMYVVIIIAVIYFAI.

It belongs to the DedA family.

The protein localises to the cell membrane. In terms of biological role, flippase that catalyzes the transport of undecaprenyl phosphate (UndP) across the cytoplasmic membrane, from the external side to the cytoplasmic side. Is involved in UndP recycling during peptidoglycan synthesis. This chain is Undecaprenyl phosphate transporter A, found in Staphylococcus aureus (strain NCTC 8325 / PS 47).